A 244-amino-acid polypeptide reads, in one-letter code: rRNA adenine N-6-methyltransferase (244 aa).

The S-adenosyl-L-methionine site is built by Asn-11, Ile-13, Gly-38, Glu-59, Asp-84, and Ser-101.

Belongs to the class I-like SAM-binding methyltransferase superfamily. rRNA adenine N(6)-methyltransferase family.

Involved in erythromycin resistance. The sequence is that of rRNA adenine N-6-methyltransferase (ermG) from Lysinibacillus sphaericus (Bacillus sphaericus).